Consider the following 345-residue polypeptide: Cytoplasmic envelopment protein 2 (345 aa).

Positions 26–35 are nuclear localization signal 1; the sequence is KLVGKSRKHR. The tract at residues 55 to 63 is nuclear export signal; sequence CILCQLLLL. The nuclear localization signal 2 stretch occupies residues 90–94; that stretch reads RRRRR.

Belongs to the herpesviridae cytoplasmic envelopment protein 2 family. In terms of assembly, interacts with cytoplasmic envelopment protein 3 and with the capsid. Interacts with host STING1; this interaction prevents viral DNA-triggered antiviral immune response.

The protein resides in the virion tegument. The protein localises to the host cytoplasm. It localises to the host nucleus. Its function is as follows. Plays a critical role in cytoplasmic virus egress. Participates in the final step of tegumentation and envelope acquisition within the host cytoplasm by directly interacting with the capsid. Upon virion binding to target cell, a signaling cascade is triggered to disrupt the interaction with the capsid, thereby preparing capsid uncoating. Additionally, antagonizes the viral DNA-triggered antiviral immune response by targeting host STING1 and preventing its dimerization and trafficking. The protein is Cytoplasmic envelopment protein 2 (UL94) of Human cytomegalovirus (strain AD169) (HHV-5).